Here is a 402-residue protein sequence, read N- to C-terminus: Putative cytochrome P450 133B1 (402 aa).

C348 lines the heme pocket.

It belongs to the cytochrome P450 family. It depends on heme as a cofactor.

The sequence is that of Putative cytochrome P450 133B1 (cyp133B1) from Xylella fastidiosa (strain 9a5c).